Consider the following 605-residue polypeptide: DNA primase (605 aa).

A CHC2-type zinc finger spans residues 38 to 62; that stretch reads CPFHDEKTPSFTVSEDKQICHCFGC. The region spanning 260–341 is the Toprim domain; the sequence is DEIVLLEGFM…NVFVIQLPSG (82 aa). 3 residues coordinate Mg(2+): glutamate 266, aspartate 310, and aspartate 312.

Belongs to the DnaG primase family. As to quaternary structure, monomer. Interacts with DnaB. Requires Zn(2+) as cofactor. It depends on Mg(2+) as a cofactor.

It catalyses the reaction ssDNA + n NTP = ssDNA/pppN(pN)n-1 hybrid + (n-1) diphosphate.. In terms of biological role, RNA polymerase that catalyzes the synthesis of short RNA molecules used as primers for DNA polymerase during DNA replication. The polypeptide is DNA primase (Staphylococcus aureus).